Here is a 1034-residue protein sequence, read N- to C-terminus: Multidrug export protein AcrF (1034 aa).

Residues 1 to 9 are Cytoplasmic-facing; sequence MANFFIRRP. Residues 10–28 traverse the membrane as a helical segment; that stretch reads IFAWVLAIILMMAGALAIL. Residues 29–339 are Periplasmic-facing; sequence QLPVAQYPTI…TPFVQLSIHE (311 aa). Residues 340–359 traverse the membrane as a helical segment; it reads VVKTLFEAIMLVFLVMYLFL. Over 360–365 the chain is Cytoplasmic; that stretch reads QNMRAT. Residues 366–385 traverse the membrane as a helical segment; the sequence is LIPTIAVPVVLLGTFAILAA. Residues 386-391 lie on the Periplasmic side of the membrane; sequence FGYSIN. Residues 392–413 form a helical membrane-spanning segment; that stretch reads TLTMFGMVLAIGLLVDDAIVVV. Topologically, residues 414 to 441 are cytoplasmic; the sequence is ENVERVMMEDKLPPKEATEKSMSQIQGA. Residues 442-460 form a helical membrane-spanning segment; it reads LVGIAMVLSAVFIPMAFFG. Topologically, residues 461–473 are periplasmic; that stretch reads GSTGAIYRQFSIT. Residues 474 to 496 form a helical membrane-spanning segment; sequence IVSAMALSVLVALILTPALCATL. Topologically, residues 497-537 are cytoplasmic; that stretch reads LKPVSAEHHENKGGFFGWFNTTFDHSVNHYTNSVGKILGST. The chain crosses the membrane as a helical span at residues 538–556; sequence GRYLLIYALIVAGMVVLFL. Residues 557-871 lie on the Periplasmic side of the membrane; sequence RLPSSFLPEE…SYQERLSGNQ (315 aa). The helical transmembrane segment at 872-891 threads the bilayer; it reads APALVAISFVVVFLCLAALY. At 892 to 897 the chain is on the cytoplasmic side; the sequence is ESWSIP. Residues 898-917 form a helical membrane-spanning segment; sequence VSVMLVVPLGIVGVLLAATL. Topologically, residues 918 to 923 are periplasmic; sequence FNQKND. The helical transmembrane segment at 924 to 945 threads the bilayer; that stretch reads VYFMVGLLTTIGLSAKNAILIV. Residues 946 to 973 are Cytoplasmic-facing; sequence EFAKDLMEKEGKGVVEATLMAVRMRLRP. The chain crosses the membrane as a helical span at residues 974–992; sequence ILMTSLAFILGVLPLAISN. Residues 993-1005 are Periplasmic-facing; it reads GAGSGAQNAVGIG. Residues 1006–1028 traverse the membrane as a helical segment; it reads VMGGMVSATLLAIFFVPVFFVVI. The Cytoplasmic portion of the chain corresponds to 1029–1034; the sequence is RRCFKG.

Belongs to the resistance-nodulation-cell division (RND) (TC 2.A.6) family. As to quaternary structure, part of the tripartite efflux system AcrEF-TolC, which is composed of an inner membrane transporter, AcrF, a periplasmic membrane fusion protein, AcrE, and an outer membrane component, TolC. The complex forms a large protein conduit and can translocate molecules across both the inner and outer membranes.

The protein localises to the cell inner membrane. Functionally, part of the tripartite efflux system AcrEF-TolC. Involved in the efflux of indole and organic solvents. The polypeptide is Multidrug export protein AcrF (acrF) (Escherichia coli (strain K12)).